We begin with the raw amino-acid sequence, 397 residues long: uncharacterized protein (397 aa).

A run of 12 helical transmembrane segments spans residues 5–25 (LKILVIGMFINVTGASFLWPL), 43–63 (LVLMLNSGASVAGNLCGGFLF), 69–89 (FKSIMLGIAITLASLMGLVFF), 92–112 (WPAYIVLLTIVGFGSGVVFPA), 131–151 (AIYVAQNAGVAVGSALGGVVA), 157–177 (YVFLANAVLYLIFFFIVYFGF), 202–222 (FAALIILSGGYVLGWLAYSQW), 233–253 (IGISLSLYSVLWTVNGILIVL), 269–289 (LKAQMVIGFIIFIVSFSMLLT), 293–313 (FPMFLAAMVILTIGEMLVWPA), 333–353 (FVNSAATGGRMIGPLFGGVLV), and 360–380 (ALVLSLLVLLLISIATTLLYD).

Belongs to the major facilitator superfamily.

Its subcellular location is the cell membrane. This is an uncharacterized protein from Bacillus subtilis (strain 168).